Reading from the N-terminus, the 455-residue chain is DNA N(6)-methyladenine demethylase ALKBH1C (455 aa).

Disordered regions lie at residues 1–114 (MNHS…AGDN) and 173–194 (SSVE…SNES). Positions 345–455 (LPDICIVNFY…GRLNLTFRQY (111 aa)) constitute a Fe2OG dioxygenase domain. 2-oxoglutarate is bound at residue 352 to 354 (NFY). Residues H363, D365, and H423 each coordinate Fe cation. Residue 447–453 (RLNLTFR) participates in 2-oxoglutarate binding.

The protein belongs to the alkB family. Fe(2+) is required as a cofactor. Expressed at low levels in roots and seedlings, but barely in cauline leaves, rosette leaves, stems, siliques and flowers.

The protein localises to the nucleus. Its subcellular location is the cytoplasm. The catalysed reaction is an N(6)-methyl-2'-deoxyadenosine in DNA + 2-oxoglutarate + O2 = a 2'-deoxyadenosine in DNA + formaldehyde + succinate + CO2. Its function is as follows. Dioxygenase that catalyzes DNA N(6)-methyladenine (6 mA) demethylation with a low efficiency. The chain is DNA N(6)-methyladenine demethylase ALKBH1C from Arabidopsis thaliana (Mouse-ear cress).